A 150-amino-acid chain; its full sequence is MKVIFLADVKGKGKKGEIKEVPTGYAQNFLIKKNLAKEATSQSIGELKGKQKAEEKAQAEILAEAQAVKAVLDEDKTRVQFQEKVGPDGRTFGSITAKKISEELQKQFGVKVDKRHIVLDHPIRAIGLIEVPVKLHKELTAEIKLAITEA.

It belongs to the bacterial ribosomal protein bL9 family.

Its function is as follows. Binds to the 23S rRNA. In Streptococcus pyogenes serotype M18 (strain MGAS8232), this protein is Large ribosomal subunit protein bL9.